Reading from the N-terminus, the 145-residue chain is Antiholin-like protein LrgA (145 aa).

Transmembrane regions (helical) follow at residues 10-30, 33-53, 72-92, and 96-116; these read PAHFFHQVIVIALVLFVSKII, FMPIPMPASVIGLVLLFVLLC, NIGLLFVPAGISVVNSLGVIS, and FLIIGLIIVSTILLLICTGYV.

This sequence belongs to the CidA/LrgA family. LrgA subfamily.

The protein localises to the cell membrane. Functionally, inhibits the expression or activity of extracellular murein hydrolases by interacting, possibly with LrgB, with the holin-like proteins CidA and/or CidB. The LrgAB and CidAB proteins may affect the proton motive force of the membrane. May be involved in programmed cell death (PCD), possibly triggering PCD in response to antibiotics and environmental stresses. This Staphylococcus aureus (strain Mu3 / ATCC 700698) protein is Antiholin-like protein LrgA.